The sequence spans 215 residues: LexA repressor (215 aa).

Positions 28–48 (RAEIAAELGFSSPNAAEEHLR) form a DNA-binding region, H-T-H motif. Catalysis depends on for autocatalytic cleavage activity residues Ser-133 and Lys-170.

It belongs to the peptidase S24 family. As to quaternary structure, homodimer.

The enzyme catalyses Hydrolysis of Ala-|-Gly bond in repressor LexA.. Functionally, represses a number of genes involved in the response to DNA damage (SOS response), including recA and lexA. In the presence of single-stranded DNA, RecA interacts with LexA causing an autocatalytic cleavage which disrupts the DNA-binding part of LexA, leading to derepression of the SOS regulon and eventually DNA repair. In Burkholderia vietnamiensis (strain G4 / LMG 22486) (Burkholderia cepacia (strain R1808)), this protein is LexA repressor.